Reading from the N-terminus, the 404-residue chain is Exodeoxyribonuclease 7 large subunit (404 aa).

It belongs to the XseA family. Heterooligomer composed of large and small subunits.

The protein resides in the cytoplasm. The catalysed reaction is Exonucleolytic cleavage in either 5'- to 3'- or 3'- to 5'-direction to yield nucleoside 5'-phosphates.. Bidirectionally degrades single-stranded DNA into large acid-insoluble oligonucleotides, which are then degraded further into small acid-soluble oligonucleotides. The protein is Exodeoxyribonuclease 7 large subunit of Ruminiclostridium cellulolyticum (strain ATCC 35319 / DSM 5812 / JCM 6584 / H10) (Clostridium cellulolyticum).